The primary structure comprises 58 residues: Large ribosomal subunit protein uL30 (58 aa).

Belongs to the universal ribosomal protein uL30 family. In terms of assembly, part of the 50S ribosomal subunit.

This chain is Large ribosomal subunit protein uL30, found in Pseudomonas putida (strain ATCC 700007 / DSM 6899 / JCM 31910 / BCRC 17059 / LMG 24140 / F1).